Here is a 230-residue protein sequence, read N- to C-terminus: Demethylmenaquinone methyltransferase (230 aa).

Residues Thr-62, Asp-80, 100 to 101, and Ser-117 each bind S-adenosyl-L-methionine; that span reads DG.

The protein belongs to the class I-like SAM-binding methyltransferase superfamily. MenG/UbiE family.

The enzyme catalyses a 2-demethylmenaquinol + S-adenosyl-L-methionine = a menaquinol + S-adenosyl-L-homocysteine + H(+). The protein operates within quinol/quinone metabolism; menaquinone biosynthesis; menaquinol from 1,4-dihydroxy-2-naphthoate: step 2/2. In terms of biological role, methyltransferase required for the conversion of demethylmenaquinol (DMKH2) to menaquinol (MKH2). The sequence is that of Demethylmenaquinone methyltransferase from Corynebacterium urealyticum (strain ATCC 43042 / DSM 7109).